We begin with the raw amino-acid sequence, 156 residues long: Arginine repressor (156 aa).

The protein belongs to the ArgR family.

The protein resides in the cytoplasm. It functions in the pathway amino-acid biosynthesis; L-arginine biosynthesis [regulation]. In terms of biological role, regulates arginine biosynthesis genes. The sequence is that of Arginine repressor from Aeromonas hydrophila subsp. hydrophila (strain ATCC 7966 / DSM 30187 / BCRC 13018 / CCUG 14551 / JCM 1027 / KCTC 2358 / NCIMB 9240 / NCTC 8049).